The sequence spans 182 residues: Pyruvoyl-dependent arginine decarboxylase (182 aa).

At S44 the chain carries Pyruvic acid (Ser).

The protein belongs to the PdaD family. Requires pyruvate as cofactor.

The enzyme catalyses L-arginine + H(+) = agmatine + CO2. In Thermoplasma volcanium (strain ATCC 51530 / DSM 4299 / JCM 9571 / NBRC 15438 / GSS1), this protein is Pyruvoyl-dependent arginine decarboxylase.